The primary structure comprises 320 residues: o-succinylbenzoate synthase (320 aa).

Catalysis depends on lysine 133, which acts as the Proton donor. Residues aspartate 161, glutamate 190, and aspartate 213 each coordinate Mg(2+). The active-site Proton acceptor is lysine 235.

The protein belongs to the mandelate racemase/muconate lactonizing enzyme family. MenC type 1 subfamily. A divalent metal cation is required as a cofactor.

The enzyme catalyses (1R,6R)-6-hydroxy-2-succinyl-cyclohexa-2,4-diene-1-carboxylate = 2-succinylbenzoate + H2O. The protein operates within quinol/quinone metabolism; 1,4-dihydroxy-2-naphthoate biosynthesis; 1,4-dihydroxy-2-naphthoate from chorismate: step 4/7. Its pathway is quinol/quinone metabolism; menaquinone biosynthesis. Converts 2-succinyl-6-hydroxy-2,4-cyclohexadiene-1-carboxylate (SHCHC) to 2-succinylbenzoate (OSB). This Escherichia coli O157:H7 protein is o-succinylbenzoate synthase.